We begin with the raw amino-acid sequence, 179 residues long: Disulfide bond formation protein B (179 aa).

Residues 1 to 14 are Cytoplasmic-facing; it reads MLSYFKELSLNRTA. The helical transmembrane segment at 15-31 threads the bilayer; sequence WLLLAFVAFALEASAIY. Residues 32 to 49 lie on the Periplasmic side of the membrane; that stretch reads FQYGMGLVPCVMCVYERL. Cysteines 41 and 44 form a disulfide. A helical membrane pass occupies residues 50–65; it reads AIFGLLIAGLVGAISP. Topologically, residues 66-72 are cytoplasmic; that stretch reads RFFLTRW. Residues 73 to 90 form a helical membrane-spanning segment; sequence LALLLWGFSAFKGLALAI. Residues 91-146 lie on the Periplasmic side of the membrane; sequence KHHDYQANPSPWNQCEFKPEFPQTMPFDQWFPSIFAPGPVNCSEKQWEMFGLGMPE. C105 and C132 are joined by a disulfide. The chain crosses the membrane as a helical span at residues 147 to 165; sequence WLILAFSIFALMFVIVLLS. Residues 166–179 lie on the Cytoplasmic side of the membrane; it reads QFKRAKPQYRSVFR.

The protein belongs to the DsbB family.

The protein resides in the cell inner membrane. Functionally, required for disulfide bond formation in some periplasmic proteins. Acts by oxidizing the DsbA protein. The polypeptide is Disulfide bond formation protein B (Actinobacillus pleuropneumoniae serotype 5b (strain L20)).